The sequence spans 282 residues: Prohibitin-1 (282 aa).

An AIM motif is present at residues 106–109 (YQNL).

It belongs to the prohibitin family. As to quaternary structure, the mitochondrial prohibitin complex consists of two subunits (phb1 and phb2). The subunits assemble into a membrane-associated ring-shaped supercomplex of approximately 1 mDa.

It is found in the mitochondrion inner membrane. It localises to the cytoplasm. Functionally, prohibitin probably acts as a holdase/unfoldase for the stabilization of newly synthesized mitochondrial proteins. Involved in mitophagy; may act as an adapter for atg8 that supports mitophagosome assembly. Negatively regulates the proteolytic processing of atg32 via the i-AAA protease. Acts as a negative regulator of the m-AAA protease. This is Prohibitin-1 (phb1) from Schizosaccharomyces pombe (strain 972 / ATCC 24843) (Fission yeast).